The primary structure comprises 559 residues: DNA ligase (559 aa).

An ATP-binding site is contributed by Glu247. Residue Lys249 is the N6-AMP-lysine intermediate of the active site. 6 residues coordinate ATP: Arg254, Arg269, Glu299, Phe339, Arg414, and Lys420.

The protein belongs to the ATP-dependent DNA ligase family. Mg(2+) serves as cofactor.

It catalyses the reaction ATP + (deoxyribonucleotide)n-3'-hydroxyl + 5'-phospho-(deoxyribonucleotide)m = (deoxyribonucleotide)n+m + AMP + diphosphate.. Functionally, DNA ligase that seals nicks in double-stranded DNA during DNA replication, DNA recombination and DNA repair. This is DNA ligase from Pyrococcus abyssi (strain GE5 / Orsay).